The primary structure comprises 193 residues: Potassium-transporting ATPase KdpC subunit (193 aa).

Residues Val9 to Gly29 traverse the membrane as a helical segment.

Belongs to the KdpC family. The system is composed of three essential subunits: KdpA, KdpB and KdpC.

Its subcellular location is the cell inner membrane. Part of the high-affinity ATP-driven potassium transport (or Kdp) system, which catalyzes the hydrolysis of ATP coupled with the electrogenic transport of potassium into the cytoplasm. This subunit acts as a catalytic chaperone that increases the ATP-binding affinity of the ATP-hydrolyzing subunit KdpB by the formation of a transient KdpB/KdpC/ATP ternary complex. The sequence is that of Potassium-transporting ATPase KdpC subunit from Koribacter versatilis (strain Ellin345).